Reading from the N-terminus, the 345-residue chain is NADH-ubiquinone oxidoreductase chain 2 (345 aa).

10 consecutive transmembrane segments (helical) span residues 3–23 (PYILSIMLISLGLGTTLTFAS), 25–45 (NWLLAWMGLEINTLAIIPLMA), 59–79 (YFITQAAAAALLLFSSLINAW), 95–115 (ALMTIAIAIKLGVAPVHFWLP), 148–168 (LMPELMIALGLMSTIVGGWGG), 177–196 (IMAYSSIAHLGWIISIMHFM), 201–223 (IINLIMYIIMTTTMFMIFNTLNS), 236–256 (FPALSAITMLALLSLGGLPPL), 273–293 (NLALTATVMALSALLSLYFYL), and 322–342 (FILPTMMIMTIAMLPISPSII).

It belongs to the complex I subunit 2 family.

The protein resides in the mitochondrion inner membrane. It carries out the reaction a ubiquinone + NADH + 5 H(+)(in) = a ubiquinol + NAD(+) + 4 H(+)(out). Functionally, core subunit of the mitochondrial membrane respiratory chain NADH dehydrogenase (Complex I) that is believed to belong to the minimal assembly required for catalysis. Complex I functions in the transfer of electrons from NADH to the respiratory chain. The immediate electron acceptor for the enzyme is believed to be ubiquinone. The sequence is that of NADH-ubiquinone oxidoreductase chain 2 (MT-ND2) from Polypterus ornatipinnis (Ornate bichir).